Reading from the N-terminus, the 63-residue chain is Small ribosomal subunit protein bS21 (63 aa).

Belongs to the bacterial ribosomal protein bS21 family.

This Syntrophus aciditrophicus (strain SB) protein is Small ribosomal subunit protein bS21.